We begin with the raw amino-acid sequence, 430 residues long: L-cysteine:1D-myo-inositol 2-amino-2-deoxy-alpha-D-glucopyranoside ligase (430 aa).

Cys48 is a binding site for Zn(2+). L-cysteinyl-5'-AMP-binding positions include Cys48–Thr51, Thr63, and Asn86–Thr88. Residues Ile50–His60 carry the 'HIGH' region motif. The 'ERGGDP' region signature appears at Glu192–Pro197. Trp232 contributes to the L-cysteinyl-5'-AMP binding site. A Zn(2+)-binding site is contributed by Cys236. Residue Gly254–Asp256 participates in L-cysteinyl-5'-AMP binding. His261 serves as a coordination point for Zn(2+). Ile288 is a binding site for L-cysteinyl-5'-AMP. A 'KMSKS' region motif is present at residues Lys294 to Ser298.

Belongs to the class-I aminoacyl-tRNA synthetase family. MshC subfamily. In terms of assembly, monomer. The cofactor is Zn(2+).

The catalysed reaction is 1D-myo-inositol 2-amino-2-deoxy-alpha-D-glucopyranoside + L-cysteine + ATP = 1D-myo-inositol 2-(L-cysteinylamino)-2-deoxy-alpha-D-glucopyranoside + AMP + diphosphate + H(+). Functionally, catalyzes the ATP-dependent condensation of GlcN-Ins and L-cysteine to form L-Cys-GlcN-Ins. The protein is L-cysteine:1D-myo-inositol 2-amino-2-deoxy-alpha-D-glucopyranoside ligase (mshC) of Corynebacterium efficiens (strain DSM 44549 / YS-314 / AJ 12310 / JCM 11189 / NBRC 100395).